A 71-amino-acid chain; its full sequence is Beta-defensin 7 (71 aa).

The signal sequence occupies residues 1–22 (MRIHYVLFAFLLVLLSPFAAFS). At glutamine 23 the chain carries Pyrrolidone carboxylic acid. The propeptide occupies 23–25 (QDI). 3 disulfides stabilise this stretch: cysteine 31–cysteine 58, cysteine 38–cysteine 52, and cysteine 42–cysteine 59.

Belongs to the beta-defensin family. LAP/TAP subfamily.

Its subcellular location is the secreted. In terms of biological role, has bactericidal activity. The chain is Beta-defensin 7 (Defb7) from Mus musculus (Mouse).